Reading from the N-terminus, the 217-residue chain is 3-demethoxyubiquinol 3-hydroxylase (217 aa).

Residues E66, E96, H99, E148, E180, and H183 each contribute to the Fe cation site.

It belongs to the COQ7 family. Fe cation is required as a cofactor.

It is found in the cell membrane. The enzyme catalyses a 5-methoxy-2-methyl-3-(all-trans-polyprenyl)benzene-1,4-diol + AH2 + O2 = a 3-demethylubiquinol + A + H2O. Its pathway is cofactor biosynthesis; ubiquinone biosynthesis. Catalyzes the hydroxylation of 2-nonaprenyl-3-methyl-6-methoxy-1,4-benzoquinol during ubiquinone biosynthesis. The polypeptide is 3-demethoxyubiquinol 3-hydroxylase (Xylella fastidiosa (strain Temecula1 / ATCC 700964)).